Reading from the N-terminus, the 476-residue chain is Serine/threonine-protein kinase Chk1 (476 aa).

A Protein kinase domain is found at 9 to 265 (WDLVQTLGEG…IPDIKKDRWY (257 aa)). ATP-binding positions include 15–23 (LGEGAYGEV) and K38. D130 functions as the Proton acceptor in the catalytic mechanism. The interval 272–329 (GTKRGRVSSGGVTESPGALPKHIRSDTDFSPVKSALGEDKASYSTSQPEPGTGGALWD) is disordered. S280 carries the post-translational modification Phosphoserine; by PKB/AKT1. A Phosphoserine modification is found at S296. S317 bears the Phosphoserine; by ATM and ATR mark. S345 bears the Phosphoserine mark. Residues 391-476 (RSLRDVCEKM…STQKVWLPPP (86 aa)) are autoinhibitory region.

It belongs to the protein kinase superfamily. CAMK Ser/Thr protein kinase family. NIM1 subfamily. Post-translationally, phosphorylated by ATR in a RAD17-dependent manner in response to ultraviolet irradiation and inhibition of DNA replication. Phosphorylated by ATM in response to ionizing irradiation. Phosphorylation at Ser-345 induces a change in the conformation of the protein and activates the kinase activity. Phosphorylation at Ser-345 also increases binding to 14-3-3 proteins and promotes nuclear retention.

Its subcellular location is the nucleus. It is found in the chromosome. It localises to the cytoplasm. The protein localises to the cytoskeleton. The protein resides in the microtubule organizing center. Its subcellular location is the centrosome. It catalyses the reaction L-seryl-[protein] + ATP = O-phospho-L-seryl-[protein] + ADP + H(+). The enzyme catalyses L-threonyl-[protein] + ATP = O-phospho-L-threonyl-[protein] + ADP + H(+). With respect to regulation, activated through phosphorylation by atr or atm in response to DNA damage or inhibition of DNA replication. In terms of biological role, serine/threonine-protein kinase which is required for checkpoint-mediated cell cycle arrest and activation of DNA repair in response to the presence of DNA damage or unreplicated DNA. May also negatively regulate cell cycle progression during unperturbed cell cycles. This regulation is achieved by a number of mechanisms that together help to preserve the integrity of the genome. Recognizes the substrate consensus sequence [R-X-X-S/T]. Binds to and phosphorylates CDC25A, CDC25B and CDC25C. This inhibits their activity through proteasomal degradation, nucleo-cytoplasmic shuttling and inhibition by proteins of the 13-3-3 family. Inhibition of CDC25 leads to increased inhibitory tyrosine phosphorylation of CDK-cyclin complexes and blocks cell cycle progression. May promote DNA repair, regulate chromatin assembly and the transcription of genes that regulate cell-cycle progression. May also play a role in replication fork maintenance. In Gallus gallus (Chicken), this protein is Serine/threonine-protein kinase Chk1 (CHEK1).